The sequence spans 327 residues: Methionyl-tRNA formyltransferase (327 aa).

121-124 serves as a coordination point for (6S)-5,6,7,8-tetrahydrofolate; it reads SLLP.

Belongs to the Fmt family.

The catalysed reaction is L-methionyl-tRNA(fMet) + (6R)-10-formyltetrahydrofolate = N-formyl-L-methionyl-tRNA(fMet) + (6S)-5,6,7,8-tetrahydrofolate + H(+). In terms of biological role, attaches a formyl group to the free amino group of methionyl-tRNA(fMet). The formyl group appears to play a dual role in the initiator identity of N-formylmethionyl-tRNA by promoting its recognition by IF2 and preventing the misappropriation of this tRNA by the elongation apparatus. The sequence is that of Methionyl-tRNA formyltransferase from Burkholderia pseudomallei (strain 1106a).